A 732-amino-acid chain; its full sequence is MQYSIEVNNQVEIFDLNKVAKQASGAVLLRVKNTVVLATVAREDVQVEEDFLPLTVQYIEKAYAAGKIPGGYVKRETKPGDFETLTARIIDRSLRPLFPKGYAYPTQIVVMVLSADPEVDLQVVSLNAASVALYLSDIPVNRPVCGVRVGYIDDKFVINPSNSELKQSAIDLYVAGTKDELLMIEMRSLPQQTTQLIPMVAIEPMIDPSLSDSMAQKQVMNEFSEDKMVEAIDFAGKAILRASSAYEEAFKEHKKEDAALELKPEIENENIAIYIDKFYKAEVKNAINQMAKSERASELGKIAKQISSDEVAQKEGWDEAVITNVLGKYKKKIVREQIINEGIRADGRGLEEVRPISIETNVLPNAHGSCLFTRGQTQALVVATLGTDSDAQMYDILTEKAPLVEKFMFNYNFPGFSVGEASPLKAPGRRELGHGNLAKRALAPSIDLASPYTIRVVSEILESNGSSSMASVCGGSLALRAAGVNTQKLVAGVAMGLIFEGEKHAVLTDIMGLEDHDGDMDFKVAGTSDGITALQMDIKLGGISLEVLKEALYQAKRGREHILALMTQADKNIEINEDVLPKLELFNVDPSKIVDIIGQAGKTIKEIIEKFEVSIDLDREKGEVKIAGGAKKNVDAAKDYIISITSKENSRSFGKKPFKHDKDRVKPTFNIGDEFTGSVKSVVDFGVFIELKDGVDGLLHISKIKSPLNVGDQVKVCVSEQKGNKISLSLVE.

Mg(2+)-binding residues include aspartate 515 and aspartate 521. In terms of domain architecture, KH spans 581-641 (PKLELFNVDP…KNVDAAKDYI (61 aa)). In terms of domain architecture, S1 motif spans 672–731 (GDEFTGSVKSVVDFGVFIELKDGVDGLLHISKIKSPLNVGDQVKVCVSEQKGNKISLSLV).

It belongs to the polyribonucleotide nucleotidyltransferase family. Mg(2+) is required as a cofactor.

The protein localises to the cytoplasm. It carries out the reaction RNA(n+1) + phosphate = RNA(n) + a ribonucleoside 5'-diphosphate. Its function is as follows. Involved in mRNA degradation. Catalyzes the phosphorolysis of single-stranded polyribonucleotides processively in the 3'- to 5'-direction. The polypeptide is Polyribonucleotide nucleotidyltransferase (Campylobacter concisus (strain 13826)).